A 343-amino-acid chain; its full sequence is Transmembrane protein 120A (343 aa).

Over 1–135 the chain is Cytoplasmic; it reads MQSPPPDPLG…KFAYKDEYEK (135 aa). Lys-130 provides a ligand contact to CoA. A helical membrane pass occupies residues 136-156; it reads FKLYLTIILIVISFTCRFLLN. The Extracellular segment spans residues 157-162; sequence SRVTDA. A helical membrane pass occupies residues 163–183; that stretch reads AFNFLLVWYYCTLTIRESILI. Residues 184 to 190 are Cytoplasmic-facing; it reads NNGSRIK. Ser-187 and Arg-188 together coordinate CoA. Residues 191 to 211 traverse the membrane as a helical segment; it reads GWWVFHHYVSTFLSGVMLTWP. Over 212 to 222 the chain is Extracellular; it reads DGLMYQKFRNQ. The chain crosses the membrane as a helical span at residues 223 to 240; the sequence is FLSFSMYQSFVQFLQYYY. CoA contacts are provided by Gln-237, Tyr-240, Gln-241, and His-283. Residues 241–273 are Cytoplasmic-facing; that stretch reads QSGCLYRLRALGERHTMDLTVEGFQSWMWRGLT. A helical transmembrane segment spans residues 274–294; the sequence is FLLPFLFFGHFWQLFNALTLF. Topologically, residues 295–305 are extracellular; the sequence is NLARDPECKEW. A helical transmembrane segment spans residues 306–326; it reads QVLMCGFPFLLLFLGNFFTTL. Residues 327-343 are Cytoplasmic-facing; that stretch reads RVVHQKFHSQQHGNKKD. Lys-332 is a binding site for CoA.

The protein belongs to the TMEM120 family. As to quaternary structure, homodimer. Forms heterooligomer with TMEM120B. Interacts with PKD2; TMEM120A inhibits PKD2 channel activity through the physical association of PKD2 with TMEM120A. As to expression, widely expressed, with higher expression in the heart, kidneys, colon and sensory neurons of the dorsal root ganglia. Expressed in nociceptors. Highly expressed in white adipose tissue (at protein level). Highly expressed in brown adipose tissue and expressed at low levels in liver.

It is found in the cell membrane. Its subcellular location is the nucleus envelope. It localises to the nucleus inner membrane. The protein localises to the endoplasmic reticulum. Functionally, multifunctional protein involved in mechanosensation, and plays an essential role in lipid metabolism and adipocyte differentiation. May function as a potential ion channel involved in sensing mechanical stimuli. Mediates the mechanosensitivity of the PKD2-TMEM120A channel complex through direct physical interaction. TMEM120A seems to affect mechanosensation by inhibiting PIEZO2 channels, possibly by altering cellular lipid content. TMEM120A is structurally similar to a lipid-modifying enzyme, ELOVL7, and contains a bound coenzyme A molecule, which suggests it might function as an enzyme in lipid metabolism. This is Transmembrane protein 120A from Mus musculus (Mouse).